The primary structure comprises 408 residues: Serine/threonine transporter SstT (408 aa).

The next 10 membrane-spanning stretches (helical) occupy residues 15–35 (MGLI…AVIW), 49–69 (FISA…TAAI), 85–105 (LLYV…SFVF), 142–162 (ALME…GLML), 192–212 (PLGI…GALL), 218–238 (LAVI…LIVF), 246–268 (YPLV…SSAA), 289–309 (ISIP…ISVI), 317–337 (LGIP…SIAA), and 362–382 (TEVA…QDST).

The protein belongs to the dicarboxylate/amino acid:cation symporter (DAACS) (TC 2.A.23) family.

The protein resides in the cell inner membrane. It carries out the reaction L-serine(in) + Na(+)(in) = L-serine(out) + Na(+)(out). The enzyme catalyses L-threonine(in) + Na(+)(in) = L-threonine(out) + Na(+)(out). In terms of biological role, involved in the import of serine and threonine into the cell, with the concomitant import of sodium (symport system). This Marinobacter nauticus (strain ATCC 700491 / DSM 11845 / VT8) (Marinobacter aquaeolei) protein is Serine/threonine transporter SstT.